The sequence spans 164 residues: Reticulon-like protein B22 (164 aa).

A Reticulon domain is found at 1–164 (MGEMGKAMGL…ILEQEAHSDT (164 aa)). 2 helical membrane-spanning segments follow: residues 30–50 (SLFS…GLLF) and 117–137 (LISG…SMLC).

Its subcellular location is the endoplasmic reticulum membrane. This is Reticulon-like protein B22 (RTNLB22) from Arabidopsis thaliana (Mouse-ear cress).